The chain runs to 383 residues: 1-deoxy-D-xylulose 5-phosphate reductoisomerase (383 aa).

NADPH contacts are provided by T10, G11, S12, I13, N38, and N121. 1-deoxy-D-xylulose 5-phosphate is bound at residue K122. E123 contributes to the NADPH binding site. D147 is a Mn(2+) binding site. 1-deoxy-D-xylulose 5-phosphate-binding residues include S148, E149, S172, and H195. E149 serves as a coordination point for Mn(2+). An NADPH-binding site is contributed by G201. 1-deoxy-D-xylulose 5-phosphate-binding residues include S208, N213, K214, and E217. E217 provides a ligand contact to Mn(2+).

The protein belongs to the DXR family. It depends on Mg(2+) as a cofactor. Mn(2+) is required as a cofactor.

It carries out the reaction 2-C-methyl-D-erythritol 4-phosphate + NADP(+) = 1-deoxy-D-xylulose 5-phosphate + NADPH + H(+). It functions in the pathway isoprenoid biosynthesis; isopentenyl diphosphate biosynthesis via DXP pathway; isopentenyl diphosphate from 1-deoxy-D-xylulose 5-phosphate: step 1/6. Catalyzes the NADPH-dependent rearrangement and reduction of 1-deoxy-D-xylulose-5-phosphate (DXP) to 2-C-methyl-D-erythritol 4-phosphate (MEP). In Ruthia magnifica subsp. Calyptogena magnifica, this protein is 1-deoxy-D-xylulose 5-phosphate reductoisomerase.